A 306-amino-acid polypeptide reads, in one-letter code: Cilia- and flagella-associated protein 73 (306 aa).

Coiled-coil stretches lie at residues 49 to 139 (LQAQ…QRLE) and 197 to 231 (QSEKQDEMLNLNQQRTQLVEQLEAAREHRQQWESK).

It belongs to the CFAP73 family.

The protein localises to the cytoplasm. It is found in the cytoskeleton. Its subcellular location is the cilium axoneme. Functionally, may play a role in ciliary/flagellar motility by regulating the assembly and the activity of axonemal inner dynein arm. This Mus musculus (Mouse) protein is Cilia- and flagella-associated protein 73.